We begin with the raw amino-acid sequence, 235 residues long: High mobility group protein 1.2 (235 aa).

A compositionally biased stretch (polar residues) spans 1-34; it reads MNSGYSANIFPSSSSPTLYQSHQLQPNPSATMYQ. The segment at 1–47 is disordered; that stretch reads MNSGYSANIFPSSSSPTLYQSHQLQPNPSATMYQATPRDMGKPPVRG. 2 consecutive DNA-binding regions (HMG box) follow at residues 47–117 and 135–203; these read GKTS…AAYG and PKRA…RNYK.

The protein belongs to the HMGB family.

It localises to the nucleus. The sequence is that of High mobility group protein 1.2 (hmg-1.2) from Caenorhabditis elegans.